Reading from the N-terminus, the 95-residue chain is Small ribosomal subunit protein bS6 (95 aa).

This sequence belongs to the bacterial ribosomal protein bS6 family.

Functionally, binds together with bS18 to 16S ribosomal RNA. This Corynebacterium diphtheriae (strain ATCC 700971 / NCTC 13129 / Biotype gravis) protein is Small ribosomal subunit protein bS6.